The following is a 558-amino-acid chain: Xylulose kinase 2 (558 aa).

Residues aspartate 16, 20-23, serine 111, and aspartate 283 contribute to the substrate site; that span reads QSMK. ATP is bound by residues threonine 305 and 456–460; that span reads GASAN.

This sequence belongs to the FGGY kinase family. Requires a divalent metal cation as cofactor.

It is found in the cytoplasm. It carries out the reaction D-xylulose + ATP = D-xylulose 5-phosphate + ADP + H(+). It participates in isoprenoid biosynthesis; carotenoid biosynthesis. Repressed by oxo-clomazone (keto-clomazone), a bleaching herbicide. Mediates 1-deoxy-D-xylulose (DX) phosphorylation in the cytoplasm prior to the translocation of 1-deoxy-D-xylulose 5-phosphate into plastids. Can also phosphorylate D-xylulose (Xyl). Uses preferentially ATP as cosubstrate. The chain is Xylulose kinase 2 from Arabidopsis thaliana (Mouse-ear cress).